Here is a 460-residue protein sequence, read N- to C-terminus: Putative RNA-guided DNA endonuclease MT2953 (460 aa).

Residues D224 and E313 contribute to the active site. The Zn(2+) site is built by C372, C375, C389, and C392. The active site involves D399. A disordered region spans residues 415–460 (VVGPVGAAVKRGADRKTGPGPAGGREARKATGHPAGEQPRDGVQVK).

The protein in the N-terminal section; belongs to the transposase 2 family. It in the C-terminal section; belongs to the transposase 35 family.

Functionally, an RNA-guided dsDNA endonuclease. When guided by an RNA derived from the right-end element of its insertion sequence element (IS), cleaves DNA downstream of the transposon-associated motif (TAM). Cleaves supercoiled and linear DNA in a staggered manner 15-21 bases from the TAM yielding 5'-overhangs. Binds reRNA, an approximately 150 nucleotide base sRNA derived from the 3' end of its own gene, the right end (RE) of the insertion sequence (IS) plus sequence downstream of the IS. The protein is Putative RNA-guided DNA endonuclease MT2953 of Mycobacterium tuberculosis (strain CDC 1551 / Oshkosh).